The sequence spans 226 residues: MTVVVVTGTDTGVGKTVACAALACHARQAGIEVAVCKPVQTGTQIGDDDLAEVARLSGVTELTGLVRYPQPLAPAAAAEHAGMALPTREQLLELIAGLDRPGRLILVEGAGGLLVELADASATLRDLAVELGALALVTVSVELGTLNHTALTLEALTTRGVACAGLVIGSWTGRPGAVQISNRSALARLAPMRATLPAGAGSMDATDFAAMSAAAFDRDWVTTLVH.

Residue 12 to 17 (GVGKTV) coordinates ATP. Threonine 16 serves as a coordination point for Mg(2+). Lysine 37 is a catalytic residue. Residue threonine 41 coordinates substrate. Residues aspartate 49, 108–111 (EGAG), 169–170 (GS), and 197–199 (PAG) contribute to the ATP site. Aspartate 49 and glutamate 108 together coordinate Mg(2+).

It belongs to the dethiobiotin synthetase family. In terms of assembly, homodimer. Mg(2+) is required as a cofactor.

It localises to the cytoplasm. It catalyses the reaction (7R,8S)-7,8-diammoniononanoate + CO2 + ATP = (4R,5S)-dethiobiotin + ADP + phosphate + 3 H(+). It functions in the pathway cofactor biosynthesis; biotin biosynthesis; biotin from 7,8-diaminononanoate: step 1/2. Functionally, catalyzes a mechanistically unusual reaction, the ATP-dependent insertion of CO2 between the N7 and N8 nitrogen atoms of 7,8-diaminopelargonic acid (DAPA, also called 7,8-diammoniononanoate) to form a ureido ring. The polypeptide is ATP-dependent dethiobiotin synthetase BioD (Mycobacterium leprae (strain Br4923)).